Here is a 407-residue protein sequence, read N- to C-terminus: Serine/threonine transporter SstT (407 aa).

The next 9 helical transmembrane spans lie at Gly12 to Ser32, Leu42 to Ile62, Ile81 to Phe101, Ala141 to Leu161, Val179 to Ala199, Ile218 to Phe238, Phe245 to Ala267, Ile288 to Leu308, and Ile330 to Ile350.

Belongs to the dicarboxylate/amino acid:cation symporter (DAACS) (TC 2.A.23) family.

The protein localises to the cell inner membrane. It carries out the reaction L-serine(in) + Na(+)(in) = L-serine(out) + Na(+)(out). It catalyses the reaction L-threonine(in) + Na(+)(in) = L-threonine(out) + Na(+)(out). Functionally, involved in the import of serine and threonine into the cell, with the concomitant import of sodium (symport system). The polypeptide is Serine/threonine transporter SstT (Campylobacter jejuni subsp. jejuni serotype O:2 (strain ATCC 700819 / NCTC 11168)).